A 355-amino-acid polypeptide reads, in one-letter code: Fructose-1,6-bisphosphatase class 1 (355 aa).

Residues E90, D109, L111, and D112 each coordinate Mg(2+). Substrate contacts are provided by residues 112 to 115 (DGSS), N204, and 256 to 258 (YLY). A Mg(2+)-binding site is contributed by E276.

This sequence belongs to the FBPase class 1 family. Homotetramer. Requires Mg(2+) as cofactor.

It is found in the cytoplasm. The enzyme catalyses beta-D-fructose 1,6-bisphosphate + H2O = beta-D-fructose 6-phosphate + phosphate. Its pathway is carbohydrate biosynthesis; gluconeogenesis. The sequence is that of Fructose-1,6-bisphosphatase class 1 from Acidiphilium cryptum (strain JF-5).